The primary structure comprises 489 residues: Phosphoglucosamine mutase (489 aa).

The active-site Phosphoserine intermediate is the Ser-136. Mg(2+) is bound by residues Ser-136, Asp-275, Asp-277, and Asp-279. Ser-136 is subject to Phosphoserine.

Belongs to the phosphohexose mutase family. Requires Mg(2+) as cofactor. Activated by phosphorylation.

The catalysed reaction is alpha-D-glucosamine 1-phosphate = D-glucosamine 6-phosphate. Functionally, catalyzes the conversion of glucosamine-6-phosphate to glucosamine-1-phosphate. The chain is Phosphoglucosamine mutase from Trichodesmium erythraeum (strain IMS101).